The chain runs to 324 residues: NADH-ubiquinone oxidoreductase chain 1 (324 aa).

Helical transmembrane passes span 3–23 (FILS…SVAF), 77–97 (ISPI…PFFV), 104–124 (LGGL…MVAG), 150–170 (LALI…IYFF), 174–194 (IYMW…TISL), 226–246 (LIFM…CVIF), 250–270 (DVFN…FIWA), and 297–317 (YLLF…WIFF).

This sequence belongs to the complex I subunit 1 family.

It is found in the mitochondrion inner membrane. The enzyme catalyses a ubiquinone + NADH + 5 H(+)(in) = a ubiquinol + NAD(+) + 4 H(+)(out). In terms of biological role, core subunit of the mitochondrial membrane respiratory chain NADH dehydrogenase (Complex I) that is believed to belong to the minimal assembly required for catalysis. Complex I functions in the transfer of electrons from NADH to the respiratory chain. The immediate electron acceptor for the enzyme is believed to be ubiquinone. This chain is NADH-ubiquinone oxidoreductase chain 1 (mt:ND1), found in Drosophila yakuba (Fruit fly).